Consider the following 748-residue polypeptide: Disintegrin and metalloproteinase domain-containing protein 10 (748 aa).

Residues 1-19 (MVLLRVLILLLSWVAGLGG) form the signal peptide. The propeptide occupies 20 to 213 (QYGNPLNKYI…NGPELLRKKR (194 aa)). Residues 20–672 (QYGNPLNKYI…SPELYENIAE (653 aa)) lie on the Extracellular side of the membrane. A Cysteine switch motif is present at residues 171–178 (GGCADHSV). Cys173 contacts Zn(2+). Residues 220–456 (NTCQLYIQTD…KRNNCFVESG (237 aa)) form the Peptidase M12B domain. Asn267 and Asn278 each carry an N-linked (GlcNAc...) asparagine glycan. 16 disulfide bridges follow: Cys344-Cys451, Cys399-Cys435, Cys460-Cys495, Cys471-Cys484, Cys473-Cys479, Cys483-Cys515, Cys503-Cys511, Cys510-Cys536, Cys524-Cys543, Cys530-Cys562, Cys555-Cys567, Cys572-Cys598, Cys580-Cys607, Cys582-Cys597, Cys594-Cys639, and Cys632-Cys645. His383 contributes to the Zn(2+) binding site. The active site involves Glu384. Residues His387 and His393 each contribute to the Zn(2+) site. A glycan (N-linked (GlcNAc...) asparagine) is linked at Asn439. The Disintegrin domain maps to 457–551 (QPICGNGMVE…LCPASDPKPN (95 aa)). Asn551 carries an N-linked (GlcNAc...) asparagine glycan. Residues 673–696 (WIVAYWWAVLLMGIALIMLMAGFI) traverse the membrane as a helical segment. At 697–748 (KICSVHTPSSNPKLPPPKPLPGTLKRRRPPQPIQQPQRQRPRESYQMGHMRR) the chain is on the cytoplasmic side. Residues 704 to 748 (PSSNPKLPPPKPLPGTLKRRRPPQPIQQPQRQRPRESYQMGHMRR) are disordered. Residues 708–715 (PKLPPPKP) carry the SH3-binding motif. Thr719 is subject to Phosphothreonine. The SH3-binding motif lies at 722–728 (RRRPPQP). Positions 734–748 (RQRPRESYQMGHMRR) are interaction with AP2A1, AP2A2 and AP2M1.

As to quaternary structure, forms a ternary EFNA5-EPHA3-ADAM10 complex mediating EFNA5 extracellular domain shedding by ADAM10 which regulates the EFNA5-EPHA3 complex internalization and function, the cleavage occurs in trans, with ADAM10 and its substrate being on the membranes of opposing cells. Interacts with the clathrin adapter AP2 complex subunits AP2A1, AP2A2, AP2B1, and AP2M1; this interaction facilitates ADAM10 endocytosis from the plasma membrane during long-term potentiation in hippocampal neurons. Forms a ternary complex composed of ADAM10, EPHA4 and CADH1; within the complex, ADAM10 cleaves CADH1 which disrupts adherens junctions. Interacts with EPHA2. Interacts with NGF in a divalent cation-dependent manner. Interacts with TSPAN14; the interaction promotes ADAM10 maturation and cell surface expression. Interacts with TSPAN5, TSPAN10, TSPAN14, TSPAN15, TSPAN17 and TSPAN33; these interactions regulate ADAM10 substrate specificity, endocytosis and turnover. Interacts (via extracellular domain) with TSPAN33 (via extracellular domain) and (via cytoplasmic domain) with AFDN; interaction with TSPAN33 allows the docking of ADAM10 to zonula adherens through a PDZ11-dependent interaction between TSPAN33 and PLEKHA7 while interaction with AFDN locks ADAM10 at zonula adherens. Interacts with DLG1; this interaction recruits ADAM10 to the cell membrane during long-term depression in hippocampal neurons. Interacts (via extracellular domain) with BACE1 (via extracellular domain). Interacts with FAM171A1. The cofactor is Zn(2+). Post-translationally, the precursor is cleaved by furin and PCSK7. As to expression, expressed at low level in kidney, spleen, lung, adrenal, heart and peripheral nerve.

The protein resides in the golgi apparatus membrane. Its subcellular location is the cell membrane. It localises to the cytoplasmic vesicle. It is found in the clathrin-coated vesicle. The protein localises to the cell projection. The protein resides in the axon. Its subcellular location is the dendrite. It localises to the cell junction. It is found in the adherens junction. The protein localises to the cytoplasm. The enzyme catalyses Endopeptidase of broad specificity.. Its activity is regulated as follows. Catalytically inactive when the propeptide is intact and associated with the mature enzyme. The disintegrin and cysteine-rich regions modulate access of substrates to exerts an inhibitory effect on the cleavage of ADAM10 substrates. In terms of biological role, transmembrane metalloprotease which mediates the ectodomain shedding of a myriad of transmembrane proteins, including adhesion proteins, growth factor precursors and cytokines being essential for development and tissue homeostasis. Associates with six members of the tetraspanin superfamily TspanC8 which regulate its exit from the endoplasmic reticulum and its substrate selectivity. Cleaves the membrane-bound precursor of TNF-alpha at '76-Ala-|-Val-77' to its mature soluble form. Responsible for the proteolytical release of soluble JAM3 from endothelial cells surface. Responsible for the proteolytic release of several other cell-surface proteins, including heparin-binding epidermal growth-like factor, ephrin-A2, CD44, CDH2 and for constitutive and regulated alpha-secretase cleavage of amyloid precursor protein (APP). Contributes to the normal cleavage of the cellular prion protein. Involved in the cleavage of the adhesion molecule L1 at the cell surface and in released membrane vesicles, suggesting a vesicle-based protease activity. Also controls the proteolytic processing of Notch and mediates lateral inhibition during neurogenesis. Required for the development of type 1 transitional B cells into marginal zone B cells, probably by cleaving Notch. Responsible for the FasL ectodomain shedding and for the generation of the remnant ADAM10-processed FasL (FasL APL) transmembrane form. Also cleaves the ectodomain of the integral membrane proteins CORIN and ITM2B. Mediates the proteolytic cleavage of LAG3, leading to release the secreted form of LAG3. Mediates the proteolytic cleavage of IL6R and IL11RA, leading to the release of secreted forms of IL6R and IL11RA. Enhances the cleavage of CHL1 by BACE1. Cleaves NRCAM. Cleaves TREM2, resulting in shedding of the TREM2 ectodomain. Involved in the development and maturation of glomerular and coronary vasculature. During development of the cochlear organ of Corti, promotes pillar cell separation by forming a ternary complex with CADH1 and EPHA4 and cleaving CADH1 at adherens junctions. May regulate the EFNA5-EPHA3 signaling. Regulates leukocyte transmigration as a sheddase for the adherens junction protein VE-cadherin/CDH5 in endothelial cells. In Bos taurus (Bovine), this protein is Disintegrin and metalloproteinase domain-containing protein 10 (ADAM10).